We begin with the raw amino-acid sequence, 108 residues long: Virion membrane protein OPG135 (108 aa).

An N-terminal signal peptide occupies residues 1–22 (MSCYTAILKSVGGLALFQVANG). Over 23–45 (AIDLCRHFFMYFCEQKLRPNSFW) the chain is Intravirion. A helical membrane pass occupies residues 46–66 (FVVVRAIASMIMYLVLGIALL). At 67 to 83 (YISEQDDKKNTNNANTN) the chain is on the virion surface side. The disordered stretch occupies residues 76–108 (NTNNANTNNDSNSNNSNNDKRNESSINSNSSPK). The segment covering 77–92 (TNNANTNNDSNSNNSN) has biased composition (low complexity). Residues Asn-84, Asn-89, and Asn-97 are each glycosylated (N-linked (GlcNAc...) asparagine; by host). The segment covering 99–108 (SSINSNSSPK) has biased composition (polar residues).

It belongs to the oerthopoxvirus OPG135 family.

It localises to the virion membrane. The protein resides in the host cytoplasm. In terms of biological role, envelope protein. Required for an early step in virion morphogenesis. The polypeptide is Virion membrane protein OPG135 (OPG135) (Vaccinia virus (strain Western Reserve) (VACV)).